Here is a 386-residue protein sequence, read N- to C-terminus: 2-deoxy-scyllo-inosose synthase (386 aa).

Residues D42, 73-76, 105-109, 129-130, 140-142, and 151-152 each bind NAD(+); these read EVHK, GITGN, TT, SLK, and KN. The active site involves K142. E184 provides a ligand contact to Co(2+). The active site involves E244. Positions 247 and 263 each coordinate Co(2+).

The protein belongs to the sugar phosphate cyclases superfamily. DOI synthase family. Requires NAD(+) as cofactor. Co(2+) serves as cofactor.

It carries out the reaction D-glucose 6-phosphate = 2-deoxy-L-scyllo-inosose + phosphate. It functions in the pathway metabolic intermediate biosynthesis; 2-deoxystreptamine biosynthesis; 2-deoxystreptamine from D-glucose 6-phosphate: step 1/4. The protein operates within antibiotic biosynthesis; paromomycin biosynthesis. In terms of biological role, catalyzes the intramolecular carbocycle formation from D-glucose-6-phosphate to 2-deoxy-scyllo-inosose (DOI). This is 2-deoxy-scyllo-inosose synthase (parC) from Streptomyces paromomycinus (Streptomyces rimosus subsp. paromomycinus).